Consider the following 304-residue polypeptide: Peroxisomal membrane protein 13 (304 aa).

Disordered stretches follow at residues 1–78 and 258–304; these read MASQ…WEQQ and PRKM…VWGN. Composition is skewed to polar residues over residues 19–44 and 56–67; these read NTSGPNPFRPPSNTSTAGSVEASGTA and RPNTAANMNSLS. Residues 262–279 are compositionally biased toward low complexity; that stretch reads QQPPQGPNGLPLPHQPHG.

The protein belongs to the peroxin-13 family. In terms of assembly, interacts with PEX14; forming the PEX13-PEX14 docking complex. Interacts (via N-terminus) with PEX7, but not with PEX5. Interacts with APEM9 (via N-terminus). In terms of tissue distribution, highly expressed in pollen. Detected in shoots, roots, stems, leaves, inflorescences and emasculated postils. Strongly expressed in both male and female gametophytes during fertilization.

It is found in the peroxisome membrane. Functionally, component of the PEX13-PEX14 docking complex, a translocon channel that specifically mediates the import of peroxisomal cargo proteins bound to PEX5 receptor. The PEX13-PEX14 docking complex forms a large import pore which can be opened to a diameter of about 9 nm. Mechanistically, PEX5 receptor along with cargo proteins associates with the PEX14 subunit of the PEX13-PEX14 docking complex in the cytosol, leading to the insertion of the receptor into the organelle membrane with the concomitant translocation of the cargo into the peroxisome matrix. Essential for pollen-tube discharge that take place only in the presence of functional peroxisomes in either the male or the female gametophyte. This is Peroxisomal membrane protein 13 from Arabidopsis thaliana (Mouse-ear cress).